The sequence spans 490 residues: GTPase Der (490 aa).

EngA-type G domains lie at 1–165 and 227–400; these read MRIA…QIPV and LKVA…TIAT. GTP is bound by residues 7-14, 54-58, 117-120, 233-240, 280-284, and 345-348; these read GRPNVGKS, DTGGV, NKAD, GHPNVGKS, DTAGL, and NKWD. The region spanning 401-485 is the KH-like domain; the sequence is TKLSTSLVNK…PFDLEYKAKP (85 aa).

It belongs to the TRAFAC class TrmE-Era-EngA-EngB-Septin-like GTPase superfamily. EngA (Der) GTPase family. As to quaternary structure, associates with the 50S ribosomal subunit.

Its function is as follows. GTPase that plays an essential role in the late steps of ribosome biogenesis. The sequence is that of GTPase Der from Chlamydia trachomatis serovar L2b (strain UCH-1/proctitis).